A 150-amino-acid chain; its full sequence is Deoxyuridine 5'-triphosphate nucleotidohydrolase (150 aa).

Residues 69 to 71, N82, and 86 to 88 each bind substrate; these read RSG and TID.

This sequence belongs to the dUTPase family. Mg(2+) is required as a cofactor.

The catalysed reaction is dUTP + H2O = dUMP + diphosphate + H(+). The protein operates within pyrimidine metabolism; dUMP biosynthesis; dUMP from dCTP (dUTP route): step 2/2. In terms of biological role, this enzyme is involved in nucleotide metabolism: it produces dUMP, the immediate precursor of thymidine nucleotides and it decreases the intracellular concentration of dUTP so that uracil cannot be incorporated into DNA. This Syntrophus aciditrophicus (strain SB) protein is Deoxyuridine 5'-triphosphate nucleotidohydrolase.